We begin with the raw amino-acid sequence, 231 residues long: 7-cyano-7-deazaguanine synthase (231 aa).

Position 8–18 (8–18 (FSGGQDSTTCL)) interacts with ATP. Cys-188, Cys-197, Cys-200, and Cys-203 together coordinate Zn(2+).

The protein belongs to the QueC family. Zn(2+) serves as cofactor.

It catalyses the reaction 7-carboxy-7-deazaguanine + NH4(+) + ATP = 7-cyano-7-deazaguanine + ADP + phosphate + H2O + H(+). Its pathway is purine metabolism; 7-cyano-7-deazaguanine biosynthesis. In terms of biological role, catalyzes the ATP-dependent conversion of 7-carboxy-7-deazaguanine (CDG) to 7-cyano-7-deazaguanine (preQ(0)). The sequence is that of 7-cyano-7-deazaguanine synthase from Salmonella choleraesuis (strain SC-B67).